We begin with the raw amino-acid sequence, 432 residues long: uncharacterized protein (432 aa).

Residues 223-432 (ASAVRGEALF…KDLIEYLKTR (210 aa)) form the Cytochrome c domain. Heme c contacts are provided by Cys236, Cys239, and His240.

This is an uncharacterized protein from Sinorhizobium fredii (strain NBRC 101917 / NGR234).